The sequence spans 453 residues: Cysteine--tRNA ligase (453 aa).

Position 31 (cysteine 31) interacts with Zn(2+). Residues 33–43 (PTVYDNPHIGN) carry the 'HIGH' region motif. 3 residues coordinate Zn(2+): cysteine 213, histidine 238, and glutamate 242. The 'KMSKS' region signature appears at 271–275 (KMAKS). Residue lysine 274 participates in ATP binding.

Belongs to the class-I aminoacyl-tRNA synthetase family. As to quaternary structure, monomer. The cofactor is Zn(2+).

It is found in the cytoplasm. It catalyses the reaction tRNA(Cys) + L-cysteine + ATP = L-cysteinyl-tRNA(Cys) + AMP + diphosphate. The protein is Cysteine--tRNA ligase of Pelagibacter ubique (strain HTCC1062).